A 299-amino-acid chain; its full sequence is Transcription elongation factor A protein 2 (299 aa).

A TFIIS N-terminal domain is found at 6-83; sequence EEIARIARRL…KSWKKLLDAS (78 aa). Residue lysine 58 forms a Glycyl lysine isopeptide (Lys-Gly) (interchain with G-Cter in ubiquitin) linkage. Phosphoserine occurs at positions 60 and 100. Residues 86 to 128 are disordered; the sequence is KARERGRGMPLPTSSRDASEAPDPSRKRPELPRAPSTPRITTF. A compositionally biased stretch (basic and acidic residues) spans 102-116; the sequence is DASEAPDPSRKRPEL. The region spanning 138–254 is the TFIIS central domain; the sequence is VRNKCREMLT…EHQMARTGGT (117 aa). The segment at 257–297 adopts a TFIIS-type zinc-finger fold; the sequence is DLFTCGKCRKKNCTYTQVQTRSSDEPMTTFVVCNECGNRWK. Zn(2+)-binding residues include cysteine 261, cysteine 264, cysteine 289, and cysteine 292.

The protein belongs to the TFS-II family. In terms of assembly, interacts with the basal transcription factor GTF2B. Interacts with REXO1. Testis and ovary specific.

It is found in the nucleus. In terms of biological role, necessary for efficient RNA polymerase II transcription elongation past template-encoded arresting sites. The arresting sites in DNA have the property of trapping a certain fraction of elongating RNA polymerases that pass through, resulting in locked ternary complexes. Cleavage of the nascent transcript by S-II allows the resumption of elongation from the new 3'-terminus. This Homo sapiens (Human) protein is Transcription elongation factor A protein 2 (TCEA2).